A 436-amino-acid polypeptide reads, in one-letter code: Methylenetetrahydrofolate--tRNA-(uracil-5-)-methyltransferase TrmFO (436 aa).

FAD is bound at residue 10–15 (GAGLAG).

The protein belongs to the MnmG family. TrmFO subfamily. FAD serves as cofactor.

It localises to the cytoplasm. The enzyme catalyses uridine(54) in tRNA + (6R)-5,10-methylene-5,6,7,8-tetrahydrofolate + NADH + H(+) = 5-methyluridine(54) in tRNA + (6S)-5,6,7,8-tetrahydrofolate + NAD(+). It carries out the reaction uridine(54) in tRNA + (6R)-5,10-methylene-5,6,7,8-tetrahydrofolate + NADPH + H(+) = 5-methyluridine(54) in tRNA + (6S)-5,6,7,8-tetrahydrofolate + NADP(+). In terms of biological role, catalyzes the folate-dependent formation of 5-methyl-uridine at position 54 (M-5-U54) in all tRNAs. The polypeptide is Methylenetetrahydrofolate--tRNA-(uracil-5-)-methyltransferase TrmFO (Staphylococcus carnosus (strain TM300)).